Reading from the N-terminus, the 231-residue chain is Coproheme decarboxylase (231 aa).

Lys44 participates in a covalent cross-link: Isoglutamyl lysine isopeptide (Lys-Gln) (interchain with Q-Cter in protein Pup). Residue Tyr133 is part of the active site. His156 lines the Fe-coproporphyrin III pocket.

The protein belongs to the ChdC family. Type 2 subfamily. Fe-coproporphyrin III is required as a cofactor.

The catalysed reaction is Fe-coproporphyrin III + 2 H2O2 + 2 H(+) = heme b + 2 CO2 + 4 H2O. The enzyme catalyses Fe-coproporphyrin III + H2O2 + H(+) = harderoheme III + CO2 + 2 H2O. It catalyses the reaction harderoheme III + H2O2 + H(+) = heme b + CO2 + 2 H2O. It participates in porphyrin-containing compound metabolism; protoheme biosynthesis. In terms of biological role, involved in coproporphyrin-dependent heme b biosynthesis. Catalyzes the decarboxylation of Fe-coproporphyrin III (coproheme) to heme b (protoheme IX), the last step of the pathway. The reaction occurs in a stepwise manner with a three-propionate intermediate. The polypeptide is Coproheme decarboxylase (Mycolicibacterium smegmatis (strain ATCC 700084 / mc(2)155) (Mycobacterium smegmatis)).